The primary structure comprises 176 residues: NAD(P)H-quinone oxidoreductase subunit 6, chloroplastic (176 aa).

5 consecutive transmembrane segments (helical) span residues 10–30, 32–52, 61–81, 92–112, and 152–172; these read FLLV…VLLP, PIFS…LYIL, AQLL…VMFM, LWTV…FLLM, and FFLP…GAIS.

Belongs to the complex I subunit 6 family. NDH is composed of at least 16 different subunits, 5 of which are encoded in the nucleus.

Its subcellular location is the plastid. The protein resides in the chloroplast thylakoid membrane. The enzyme catalyses a plastoquinone + NADH + (n+1) H(+)(in) = a plastoquinol + NAD(+) + n H(+)(out). It carries out the reaction a plastoquinone + NADPH + (n+1) H(+)(in) = a plastoquinol + NADP(+) + n H(+)(out). NDH shuttles electrons from NAD(P)H:plastoquinone, via FMN and iron-sulfur (Fe-S) centers, to quinones in the photosynthetic chain and possibly in a chloroplast respiratory chain. The immediate electron acceptor for the enzyme in this species is believed to be plastoquinone. Couples the redox reaction to proton translocation, and thus conserves the redox energy in a proton gradient. The polypeptide is NAD(P)H-quinone oxidoreductase subunit 6, chloroplastic (ndhG) (Capsella bursa-pastoris (Shepherd's purse)).